The sequence spans 203 residues: Small ribosomal subunit protein uS4 (203 aa).

One can recognise an S4 RNA-binding domain in the interval 93 to 156; the sequence is RRLDNVVYRL…AKVPAILEAV (64 aa).

This sequence belongs to the universal ribosomal protein uS4 family. Part of the 30S ribosomal subunit. Contacts protein S5. The interaction surface between S4 and S5 is involved in control of translational fidelity.

One of the primary rRNA binding proteins, it binds directly to 16S rRNA where it nucleates assembly of the body of the 30S subunit. In terms of biological role, with S5 and S12 plays an important role in translational accuracy. The protein is Small ribosomal subunit protein uS4 of Streptococcus mutans serotype c (strain ATCC 700610 / UA159).